Consider the following 280-residue polypeptide: Putative ABC transporter ATP-binding protein MTH_133 (280 aa).

The ABC transporter domain occupies 6 to 241 (IEAVDIRYTY…IDTIRGANLR (236 aa)). Residue 39–46 (GPNGAGKS) coordinates ATP.

This sequence belongs to the ABC transporter superfamily.

The protein localises to the cell membrane. In terms of biological role, probably part of an ABC transporter complex. Responsible for energy coupling to the transport system. The sequence is that of Putative ABC transporter ATP-binding protein MTH_133 from Methanothermobacter thermautotrophicus (strain ATCC 29096 / DSM 1053 / JCM 10044 / NBRC 100330 / Delta H) (Methanobacterium thermoautotrophicum).